A 369-amino-acid polypeptide reads, in one-letter code: 4-hydroxy-3-methylbut-2-en-1-yl diphosphate synthase (flavodoxin) (369 aa).

[4Fe-4S] cluster is bound by residues C270, C273, C305, and E312.

This sequence belongs to the IspG family. [4Fe-4S] cluster serves as cofactor.

It carries out the reaction (2E)-4-hydroxy-3-methylbut-2-enyl diphosphate + oxidized [flavodoxin] + H2O + 2 H(+) = 2-C-methyl-D-erythritol 2,4-cyclic diphosphate + reduced [flavodoxin]. The protein operates within isoprenoid biosynthesis; isopentenyl diphosphate biosynthesis via DXP pathway; isopentenyl diphosphate from 1-deoxy-D-xylulose 5-phosphate: step 5/6. Its function is as follows. Converts 2C-methyl-D-erythritol 2,4-cyclodiphosphate (ME-2,4cPP) into 1-hydroxy-2-methyl-2-(E)-butenyl 4-diphosphate. The sequence is that of 4-hydroxy-3-methylbut-2-en-1-yl diphosphate synthase (flavodoxin) from Pseudomonas entomophila (strain L48).